Reading from the N-terminus, the 185-residue chain is DNA-directed RNA polymerase 21 kDa subunit (185 aa).

This sequence belongs to the poxviridae DNA-directed RNA polymerase 22 kDa subunit family. As to quaternary structure, the DNA-dependent RNA polymerase used for intermediate and late genes expression consists of eight subunits Rpo30/OPG66, Rpo7/OPG90, Rpo22/OPG103, Rpo147/OPG105, Rpo18/OPG119, Rpo19/OPG131, Rpo132/OPG151 and Rpo35/OPG156. The same holoenzyme, with the addition of the transcription-specificity factor OPG109, is used for early gene expression.

Its subcellular location is the virion. It carries out the reaction RNA(n) + a ribonucleoside 5'-triphosphate = RNA(n+1) + diphosphate. Its function is as follows. Part of the DNA-dependent RNA polymerase which catalyzes the transcription of viral DNA into RNA using the four ribonucleoside triphosphates as substrates. Responsible for the transcription of early, intermediate and late genes. DNA-dependent RNA polymerase associates with the early transcription factor (ETF), itself composed of OPG118 and OPG133, thereby allowing the early genes transcription. Late transcription, and probably also intermediate transcription, require newly synthesized RNA polymerase. This chain is DNA-directed RNA polymerase 21 kDa subunit (OPG103), found in Oryctolagus cuniculus (Rabbit).